Consider the following 146-residue polypeptide: Hemoglobin subunit beta (146 aa).

In terms of domain architecture, Globin spans 2–146 (QWTAEEKQLI…VAHALARKYH (145 aa)). Heme b-binding residues include histidine 63 and histidine 92.

The protein belongs to the globin family. As to quaternary structure, heterotetramer of two alpha chains and two beta chains. In terms of tissue distribution, red blood cells.

Its function is as follows. Involved in oxygen transport from the lung to the various peripheral tissues. The chain is Hemoglobin subunit beta (HBB) from Apus apus (Common swift).